A 340-amino-acid chain; its full sequence is 3-isopropylmalate dehydrogenase (340 aa).

Substrate contacts are provided by R88, R98, R122, and D212. Mg(2+) is bound by residues D212, D236, and D240. 272–284 provides a ligand contact to NAD(+); sequence GSAPDIMGKGIAD.

It belongs to the isocitrate and isopropylmalate dehydrogenases family. LeuB type 2 subfamily. As to quaternary structure, homodimer. Mg(2+) serves as cofactor. Mn(2+) is required as a cofactor.

Its subcellular location is the cytoplasm. The enzyme catalyses (2R,3S)-3-isopropylmalate + NAD(+) = 4-methyl-2-oxopentanoate + CO2 + NADH. Its pathway is amino-acid biosynthesis; L-leucine biosynthesis; L-leucine from 3-methyl-2-oxobutanoate: step 3/4. Catalyzes the oxidation of 3-carboxy-2-hydroxy-4-methylpentanoate (3-isopropylmalate) to 3-carboxy-4-methyl-2-oxopentanoate. The product decarboxylates to 4-methyl-2 oxopentanoate. The chain is 3-isopropylmalate dehydrogenase from Corynebacterium efficiens (strain DSM 44549 / YS-314 / AJ 12310 / JCM 11189 / NBRC 100395).